Here is a 296-residue protein sequence, read N- to C-terminus: ATP-dependent ribose-1-phosphate kinase (296 aa).

Asp-242 functions as the Proton acceptor in the catalytic mechanism.

This sequence belongs to the carbohydrate kinase PfkB family. Mg(2+) serves as cofactor.

The catalysed reaction is alpha-D-ribose 1-phosphate + ATP = alpha-D-ribose 1,5-bisphosphate + ADP + H(+). With respect to regulation, requires salt for kinase activity. 2.0 M is the optimal KCl concentration. Its function is as follows. Kinase involved in the non-carboxylating pentose bisphosphate pathway, a nucleoside degradation pathway present in some halophilic archaea. Catalyzes the ATP-dependent phosphorylation of ribose 1-phosphate (R1P) to ribose 1,5-bisphosphate (R15P). Shows weak activity towards various other phosphate acceptors, such as xylulose, 2'-deoxyguanosine and D-ribulose. ATP is the most preferred phosphate donor, followed by CTP and GTP. In Halopiger xanaduensis (strain DSM 18323 / JCM 14033 / SH-6), this protein is ATP-dependent ribose-1-phosphate kinase.